The sequence spans 204 residues: Cytochrome b6 (204 aa).

Residues 23–43 (YCLGGITLTSFLVQVATGSAM) form a helical membrane-spanning segment. Residue Cys-24 coordinates heme c. Heme b is bound by residues His-75 and His-89. The next 3 helical transmembrane spans lie at 81 to 101 (MMVL…GFKK), 107 to 127 (WVTG…GYSL), and 136 to 157 (AVKI…LVEL). Residues His-176 and His-191 each contribute to the heme b site. The chain crosses the membrane as a helical span at residues 177 to 197 (TFILPLLTAVFMPMHFLMIRK).

The protein belongs to the cytochrome b family. PetB subfamily. The 4 large subunits of the cytochrome b6-f complex are cytochrome b6, subunit IV (17 kDa polypeptide, PetD), cytochrome f and the Rieske protein, while the 4 small subunits are PetG, PetL, PetM and PetN. The complex functions as a dimer. The cofactor is heme b. Heme c is required as a cofactor.

Its subcellular location is the plastid. The protein resides in the chloroplast thylakoid membrane. In terms of biological role, component of the cytochrome b6-f complex, which mediates electron transfer between photosystem II (PSII) and photosystem I (PSI), cyclic electron flow around PSI, and state transitions. In Picea abies (Norway spruce), this protein is Cytochrome b6.